We begin with the raw amino-acid sequence, 159 residues long: 2-C-methyl-D-erythritol 2,4-cyclodiphosphate synthase (159 aa).

Residues Asp-8 and His-10 each contribute to the a divalent metal cation site. 4-CDP-2-C-methyl-D-erythritol 2-phosphate-binding positions include Asp-8–His-10 and His-34–Ser-35. His-42 is an a divalent metal cation binding site. Residues Asp-56–Gly-58, Phe-61–Asp-65, Ala-100–Ala-106, Thr-132–Glu-135, Phe-139, and Arg-142 each bind 4-CDP-2-C-methyl-D-erythritol 2-phosphate.

This sequence belongs to the IspF family. As to quaternary structure, homotrimer. A divalent metal cation serves as cofactor.

It catalyses the reaction 4-CDP-2-C-methyl-D-erythritol 2-phosphate = 2-C-methyl-D-erythritol 2,4-cyclic diphosphate + CMP. Its pathway is isoprenoid biosynthesis; isopentenyl diphosphate biosynthesis via DXP pathway; isopentenyl diphosphate from 1-deoxy-D-xylulose 5-phosphate: step 4/6. In terms of biological role, involved in the biosynthesis of isopentenyl diphosphate (IPP) and dimethylallyl diphosphate (DMAPP), two major building blocks of isoprenoid compounds. Catalyzes the conversion of 4-diphosphocytidyl-2-C-methyl-D-erythritol 2-phosphate (CDP-ME2P) to 2-C-methyl-D-erythritol 2,4-cyclodiphosphate (ME-CPP) with a corresponding release of cytidine 5-monophosphate (CMP). The protein is 2-C-methyl-D-erythritol 2,4-cyclodiphosphate synthase of Cronobacter sakazakii (strain ATCC BAA-894) (Enterobacter sakazakii).